The chain runs to 224 residues: N-(5'-phosphoribosyl)anthranilate isomerase (224 aa).

It belongs to the TrpF family.

It carries out the reaction N-(5-phospho-beta-D-ribosyl)anthranilate = 1-(2-carboxyphenylamino)-1-deoxy-D-ribulose 5-phosphate. Its pathway is amino-acid biosynthesis; L-tryptophan biosynthesis; L-tryptophan from chorismate: step 3/5. The chain is N-(5'-phosphoribosyl)anthranilate isomerase (TRP1) from Saccharomyces cerevisiae (strain ATCC 204508 / S288c) (Baker's yeast).